A 184-amino-acid polypeptide reads, in one-letter code: NADH-quinone oxidoreductase subunit B (184 aa).

[4Fe-4S] cluster-binding residues include C63, C64, C128, and C158.

Belongs to the complex I 20 kDa subunit family. NDH-1 is composed of 14 different subunits. Subunits NuoB, C, D, E, F, and G constitute the peripheral sector of the complex. [4Fe-4S] cluster is required as a cofactor.

It localises to the cell inner membrane. The enzyme catalyses a quinone + NADH + 5 H(+)(in) = a quinol + NAD(+) + 4 H(+)(out). In terms of biological role, NDH-1 shuttles electrons from NADH, via FMN and iron-sulfur (Fe-S) centers, to quinones in the respiratory chain. The immediate electron acceptor for the enzyme in this species is believed to be ubiquinone. Couples the redox reaction to proton translocation (for every two electrons transferred, four hydrogen ions are translocated across the cytoplasmic membrane), and thus conserves the redox energy in a proton gradient. This chain is NADH-quinone oxidoreductase subunit B, found in Xylella fastidiosa (strain M12).